Here is a 136-residue protein sequence, read N- to C-terminus: uncharacterized protein (136 aa).

The N-terminal stretch at 1-19 (MKKLLMVILGIALIGMAYA) is a signal peptide.

This is an uncharacterized protein from Methanocaldococcus jannaschii (strain ATCC 43067 / DSM 2661 / JAL-1 / JCM 10045 / NBRC 100440) (Methanococcus jannaschii).